Consider the following 306-residue polypeptide: Acetyl-coenzyme A carboxylase carboxyl transferase subunit beta (306 aa).

Residues 27 to 296 enclose the CoA carboxyltransferase N-terminal domain; it reads LWHKCPSCEA…PEFVAAPVEP (270 aa). The Zn(2+) site is built by cysteine 31, cysteine 34, cysteine 50, and cysteine 53. The C4-type zinc finger occupies 31–53; sequence CPSCEAVLYRPELEKTLDVCPKC.

This sequence belongs to the AccD/PCCB family. As to quaternary structure, acetyl-CoA carboxylase is a heterohexamer composed of biotin carboxyl carrier protein (AccB), biotin carboxylase (AccC) and two subunits each of ACCase subunit alpha (AccA) and ACCase subunit beta (AccD). Zn(2+) is required as a cofactor.

Its subcellular location is the cytoplasm. It carries out the reaction N(6)-carboxybiotinyl-L-lysyl-[protein] + acetyl-CoA = N(6)-biotinyl-L-lysyl-[protein] + malonyl-CoA. The protein operates within lipid metabolism; malonyl-CoA biosynthesis; malonyl-CoA from acetyl-CoA: step 1/1. Functionally, component of the acetyl coenzyme A carboxylase (ACC) complex. Biotin carboxylase (BC) catalyzes the carboxylation of biotin on its carrier protein (BCCP) and then the CO(2) group is transferred by the transcarboxylase to acetyl-CoA to form malonyl-CoA. This Pseudomonas fluorescens (strain ATCC BAA-477 / NRRL B-23932 / Pf-5) protein is Acetyl-coenzyme A carboxylase carboxyl transferase subunit beta.